We begin with the raw amino-acid sequence, 1496 residues long: Rap guanine nucleotide exchange factor 2 (1496 aa).

2 disordered regions span residues 40-59 and 68-101; these read HVSS…SSSL and SEAG…SDPL. Residues 83 to 94 are compositionally biased toward acidic residues; that stretch reads VDSEDDDDEEDI. Residue 135–254 coordinates a nucleoside 3',5'-cyclic phosphate; it reads AFANMTMSVR…VEEEGEIVMV (120 aa). The N-terminal Ras-GEF domain maps to 267–380; that stretch reads KGHIVIKGTS…RLLNIACAAK (114 aa). The 86-residue stretch at 385–470 folds into the PDZ domain; the sequence is LMTLTKPSRE…ITVKTNLFVF (86 aa). Ser-501 carries the post-translational modification Phosphoserine. Residues 606–692 form the Ras-associating domain; it reads PDQVLRVFKA…GRYYLKNNME (87 aa). At Thr-644 the chain carries Phosphothreonine; by PLK2. In terms of domain architecture, Ras-GEF spans 717–944; that stretch reads STVEVATQLS…SQGSANATVL (228 aa). Ser-806 carries the post-translational modification Phosphoserine; by PLK2. Residue Ser-930 is modified to Phosphoserine. 2 positions are modified to phosphoserine; by PLK2: Ser-933 and Ser-1022. The interval 1002 to 1051 is disordered; that stretch reads PATSTLPKNPGDKKPVKSETSPVAPRAGPQQKVQPQQPLAQPQPPHKVSQ. Over residues 1030–1041 the composition is skewed to low complexity; that stretch reads PQQKVQPQQPLA. 6 positions are modified to phosphoserine: Ser-1079, Ser-1088, Ser-1094, Ser-1115, Ser-1119, and Ser-1158. Positions 1093-1159 are disordered; the sequence is GSLERHRKQA…RSSIVSNSSF (67 aa). Composition is skewed to low complexity over residues 1110 to 1124 and 1140 to 1159; these read SSQL…QSSP and SDSG…NSSF. Ser-1175 is subject to Phosphoserine; by PLK2. Disordered stretches follow at residues 1224–1256, 1303–1369, and 1390–1496; these read STEE…SGSH, STKY…EEAK, and RKEG…VSAV. Over residues 1227 to 1237 the composition is skewed to basic and acidic residues; the sequence is ELSHDQGDRAS. Polar residues-rich tracts occupy residues 1246–1256 and 1306–1330; these read GSWTSCSSGSH and YNRQ…SSTG. The span at 1440 to 1455 shows a compositional bias: low complexity; it reads PTEAPAPGQTPPAAAA. The segment covering 1485-1496 has biased composition (acidic residues); that stretch reads AEEDEDEQVSAV.

This sequence belongs to the RAPGEF2 family. As to quaternary structure, found in a complex, at least composed of KIDINS220, MAGI2, NTRK1 and RAPGEF2; the complex is mainly formed at late endosomes in a neuronal growth factor (NGF)-dependent manner. Interacts (via C-terminal domain) with NEDD4 (via WW domains); this interaction leads to ubiquitination and degradation via the proteasome pathway in a cAMP-independent manner. Interacts with MAGI1 (via PDZ domain). Interacts with ADRB1 (via C-terminal PDZ motif); the interaction is direct. Interacts (via Ras-associating domain) with RAP1A (via GTP-bound active form). Interacts weakly with HRAS (via GDP- and GTP-bound forms). Interacts (via C-terminal domain) with MAGI2 (via PDZ and WW domains). Interacts with CDH1, CTNNB1 and TJP1. In terms of processing, ubiquitinated by NEDD4, leading to proteasomal degradation. Phosphorylation by PLK2 promotes its activity. In terms of tissue distribution, expressed in all layers of the cerebral cortex, hippocampus and cerebellum. Expressed in the cortical plate, cingulate cortex and the subventricular zone. Expressed in neurons and endocrine cells (at protein level). Expressed in melanoma cells.

The protein resides in the cytoplasm. It is found in the perinuclear region. It localises to the cell membrane. Its subcellular location is the late endosome. The protein localises to the cell junction. In terms of biological role, functions as a guanine nucleotide exchange factor (GEF), which activates Rap and Ras family of small GTPases by exchanging bound GDP for free GTP in a cAMP-dependent manner. Serves as a link between cell surface receptors and Rap/Ras GTPases in intracellular signaling cascades. Also acts as an effector for Rap1 by direct association with Rap1-GTP thereby leading to the amplification of Rap1-mediated signaling. Shows weak activity on HRAS. It is controversial whether RAPGEF2 binds cAMP and cGMP or not. Its binding to ligand-activated beta-1 adrenergic receptor ADRB1 leads to the Ras activation through the G(s)-alpha signaling pathway. Involved in the cAMP-induced Ras and Erk1/2 signaling pathway that leads to sustained inhibition of long term melanogenesis by reducing dendrite extension and melanin synthesis. Also provides inhibitory signals for cell proliferation of melanoma cells and promotes their apoptosis in a cAMP-independent nanner. Regulates cAMP-induced neuritogenesis by mediating the Rap1/B-Raf/ERK signaling through a pathway that is independent on both PKA and RAPGEF3/RAPGEF4. Involved in neuron migration and in the formation of the major forebrain fiber connections forming the corpus callosum, the anterior commissure and the hippocampal commissure during brain development. Involved in neuronal growth factor (NGF)-induced sustained activation of Rap1 at late endosomes and in brain-derived neurotrophic factor (BDNF)-induced axon outgrowth of hippocampal neurons. Plays a role in the regulation of embryonic blood vessel formation and in the establishment of basal junction integrity and endothelial barrier function. May be involved in the regulation of the vascular endothelial growth factor receptor KDR and cadherin CDH5 expression at allantois endothelial cell-cell junctions. The protein is Rap guanine nucleotide exchange factor 2 (Rapgef2) of Mus musculus (Mouse).